Here is a 66-residue protein sequence, read N- to C-terminus: DNA gyrase inhibitor YacG (66 aa).

Zn(2+) contacts are provided by cysteine 10, cysteine 13, cysteine 29, and cysteine 33. The tract at residues lysine 46 to tyrosine 66 is disordered. Over residues aspartate 56–tyrosine 66 the composition is skewed to acidic residues.

It belongs to the DNA gyrase inhibitor YacG family. As to quaternary structure, interacts with GyrB. Requires Zn(2+) as cofactor.

Inhibits all the catalytic activities of DNA gyrase by preventing its interaction with DNA. Acts by binding directly to the C-terminal domain of GyrB, which probably disrupts DNA binding by the gyrase. This is DNA gyrase inhibitor YacG from Sodalis glossinidius (strain morsitans).